Reading from the N-terminus, the 495-residue chain is RuBisCO large subunit-binding protein subunit alpha (495 aa).

This sequence belongs to the chaperonin (HSP60) family. In terms of assembly, oligomer of probably six alpha and six beta subunits.

The protein resides in the plastid. Its subcellular location is the chloroplast. Functionally, this protein binds RuBisCO small and large subunits and is implicated in the assembly of the enzyme oligomer. In Ricinus communis (Castor bean), this protein is RuBisCO large subunit-binding protein subunit alpha.